The chain runs to 381 residues: E3 ubiquitin-protein ligase KCMF1 (381 aa).

S2 carries the post-translational modification N-acetylserine. At S2 the chain carries Phosphoserine. The ZZ-type zinc finger occupies H4 to D60. The Zn(2+) site is built by C9, C12, C24, C27, C33, C36, H46, and H50. The segment at F78–H101 adopts a C2H2-type zinc-finger fold. Residues M154–E194 form a disordered region. Phosphoserine is present on residues S169, S189, and S212. Residues S175–S192 are compositionally biased toward low complexity. A coiled-coil region spans residues A224–N259. S335 and S336 each carry phosphoserine.

It belongs to the KCMF1 family. As to quaternary structure, component of the SIFI complex, composed of KCMF1, UBR4 and calmodulin (CALM1, CALM2 or CALM3). Testis, liver, kidney, heart and skeletal muscle.

It is found in the cytoplasm. The protein resides in the late endosome. The protein localises to the lysosome. It carries out the reaction S-ubiquitinyl-[E2 ubiquitin-conjugating enzyme]-L-cysteine + [acceptor protein]-L-lysine = [E2 ubiquitin-conjugating enzyme]-L-cysteine + N(6)-ubiquitinyl-[acceptor protein]-L-lysine.. Its pathway is protein modification; protein ubiquitination. E3 ubiquitin-protein ligase which accepts ubiquitin from an E2 ubiquitin-conjugating enzyme and then transfers it to targeted substrates, promoting their degradation by the proteasome. Together with UBR4, component of the N-end rule pathway: ubiquitinates proteins bearing specific N-terminal residues that are destabilizing according to the N-end rule, leading to their degradation. Does not ubiquitinate proteins that are acetylated at the N-terminus. Together with UBR4, part of a protein quality control pathway that catalyzes ubiquitination and degradation of proteins that have been oxidized in response to reactive oxygen species (ROS): recognizes proteins with an Arg-CysO3(H) degron at the N-terminus, and mediates assembly of heterotypic 'Lys-63'-/'Lys-27'-linked branched ubiquitin chains on oxidized proteins, leading to their degradation by autophagy. Catalytic component of the SIFI complex, a multiprotein complex required to inhibit the mitochondrial stress response after a specific stress event has been resolved: ubiquitinates and degrades (1) components of the HRI-mediated signaling of the integrated stress response, such as DELE1 and EIF2AK1/HRI, as well as (2) unimported mitochondrial precursors. Within the SIFI complex, UBR4 initiates ubiquitin chain that are further elongated or branched by KCMF1. The sequence is that of E3 ubiquitin-protein ligase KCMF1 from Mus musculus (Mouse).